The sequence spans 189 residues: METSAPRAGSQVVATTARHSAAYRADPLRVSSRDKLTEMAASSQGNFEGNFESLDLAEFAKKQPWWRKLFGQESGPSAEKYSVATQLFIGGVTGWCTGFIFQKVGKLAATAVGGGFFLLQLANHTGYIKVDWQRVEKDMKKAKEQLKIRKSNQIPTEVRSKAEEVVSFVKKNVLVTGGFFGGFLLGMAS.

Residues 1–80 are Cytoplasmic-facing; sequence METSAPRAGS…GQESGPSAEK (80 aa). Phosphoserine occurs at positions 10 and 53. The helical transmembrane segment at 81–101 threads the bilayer; the sequence is YSVATQLFIGGVTGWCTGFIF. Residues 102–107 are Mitochondrial intermembrane-facing; the sequence is QKVGKL. Residues 108-128 traverse the membrane as a helical segment; the sequence is AATAVGGGFFLLQLANHTGYI. At 129 to 164 the chain is on the cytoplasmic side; sequence KVDWQRVEKDMKKAKEQLKIRKSNQIPTEVRSKAEE. A Phosphoserine modification is found at serine 151. A helical membrane pass occupies residues 165–185; the sequence is VVSFVKKNVLVTGGFFGGFLL. Residues 186 to 189 are Mitochondrial intermembrane-facing; the sequence is GMAS.

This sequence belongs to the FUN14 family. Highly expressed in platelets (at protein level).

It localises to the mitochondrion outer membrane. It is found in the nucleus. In terms of biological role, binds directly and specifically 1,2-Diacyl-sn-glycero-3-phospho-(1'-myo-inositol-3',4',5'-bisphosphate) (PIP3) leading to the recruitment of PIP3 to mitochondria and may play a role in the regulation of the platelet activation via AKT/GSK3B/cGMP signaling pathways. May act as transcription factor that regulates SREBP1 (isoform SREBP-1C) expression in order to modulate triglyceride (TG) homeostasis in hepatocytes. The chain is FUN14 domain-containing protein 2 from Homo sapiens (Human).